The primary structure comprises 377 residues: Alanine dehydrogenase (377 aa).

Residues R15 and K74 each coordinate substrate. H95 serves as the catalytic Proton donor/acceptor. Residues S133, D197, R202, S219, 238–239, 266–269, and 304–307 each bind NAD(+); these read VL, VAID, and VGNM. Residue D269 is the Proton donor/acceptor of the active site.

It belongs to the AlaDH/PNT family. In terms of assembly, homohexamer.

The enzyme catalyses L-alanine + NAD(+) + H2O = pyruvate + NH4(+) + NADH + H(+). It functions in the pathway organosulfur degradation; alkanesulfonate degradation. Involved in an anaerobic respiration pathway that converts the sulfonate taurine (2-aminoethanesulfonate) to ammonia, acetate and sulfide. Acts as an alanine dehydrogenase that regenerates pyruvate, the amino group acceptor for the taurine--pyruvate aminotransferase enzyme, and liberates ammonia. The protein is Alanine dehydrogenase of Bilophila wadsworthia (strain 3_1_6).